A 496-amino-acid polypeptide reads, in one-letter code: Rhamnulokinase (496 aa).

Position 13 to 17 (13 to 17) interacts with ATP; sequence ASSGR. Residues G83 and 236–238 contribute to the substrate site; that span reads HDT. The Proton acceptor role is filled by D237. ATP is bound at residue T259. Residue N296 participates in substrate binding. Q304 provides a ligand contact to ATP. An intrachain disulfide couples C353 to C370. G402 is an ATP binding site. A disulfide bond links C413 and C417.

This sequence belongs to the rhamnulokinase family. Mg(2+) serves as cofactor.

The enzyme catalyses L-rhamnulose + ATP = L-rhamnulose 1-phosphate + ADP + H(+). The protein operates within carbohydrate degradation; L-rhamnose degradation; glycerone phosphate from L-rhamnose: step 2/3. Involved in the catabolism of L-rhamnose (6-deoxy-L-mannose). Catalyzes the transfer of the gamma-phosphate group from ATP to the 1-hydroxyl group of L-rhamnulose to yield L-rhamnulose 1-phosphate. This is Rhamnulokinase from Pectobacterium carotovorum subsp. carotovorum (strain PC1).